The chain runs to 435 residues: Xylose isomerase (435 aa).

2 residues coordinate Mg(2+): aspartate 306 and aspartate 308.

The protein belongs to the xylose isomerase family. In terms of assembly, homotetramer. The cofactor is Mg(2+).

Its subcellular location is the cytoplasm. It catalyses the reaction alpha-D-xylose = alpha-D-xylulofuranose. This is Xylose isomerase from Brucella melitensis biotype 2 (strain ATCC 23457).